The following is a 134-amino-acid chain: Small ribosomal subunit protein uS8c (134 aa).

Belongs to the universal ribosomal protein uS8 family. Part of the 30S ribosomal subunit.

It localises to the plastid. The protein localises to the chloroplast. Functionally, one of the primary rRNA binding proteins, it binds directly to 16S rRNA central domain where it helps coordinate assembly of the platform of the 30S subunit. The protein is Small ribosomal subunit protein uS8c (rps8) of Arabis hirsuta (Hairy rock-cress).